Reading from the N-terminus, the 508-residue chain is MDEYEAQLLVVEQALLVTTDAQQREELIALRANLEELLALTRSSETEDINETNTQQATDIDDELKRFQNELSSLEGEQTDSQDDQQRLEELRTKYNALLGEKCSAPHEHSWGALSYHNALICGVDDELILDKNGILDVRLRVLFTNPTHREMLPCNYYLEGECRFDETRCRYSHGALVPGAAIKDYNAPDFCRLARNCPVLAKLQDRLWHRGRVLCVNFMEQQCRVRLDGQEHKERERDFPFEELFPLIVEEDDELSSDSEETNETDGSDAANESDMDDVEAARQARMVELSLFTFKPNERLGAWEQYTRGIGSKLMASMGYIHGTGLGSDGRGIVTPVSAQILPQGRSLDACMELREAANGDKDYFSIERKLKRAQRRQQAANEKAYERESKRTDVFAFLNGSVLGQGSQRAENSTKTTKIDNLQQHTNKSLNVETVRIADDIRRKQRDIAKTQQSLARNAIDSQLQKRLSSQLQSQKQELATLQAQESSLSKEQQTRKSKNKMFEF.

The C3H1-type zinc-finger motif lies at 154–177 (PCNYYLEGECRFDETRCRYSHGAL). The segment at 253–279 (DDELSSDSEETNETDGSDAANESDMDD) is disordered. Positions 309–355 (TRGIGSKLMASMGYIHGTGLGSDGRGIVTPVSAQILPQGRSLDACME) constitute a G-patch domain. The span at 486 to 495 (QAQESSLSKE) shows a compositional bias: polar residues. Positions 486–508 (QAQESSLSKEQQTRKSKNKMFEF) are disordered. The segment covering 499 to 508 (RKSKNKMFEF) has biased composition (basic residues).

Its subcellular location is the nucleus. Functionally, transcription repressor. This Drosophila virilis (Fruit fly) protein is Zinc finger CCCH-type with G patch domain-containing protein.